We begin with the raw amino-acid sequence, 179 residues long: Inosine/xanthosine triphosphatase (179 aa).

A substrate-binding site is contributed by threonine 8–lysine 13. Residues aspartate 38 and glutamate 68 each contribute to the Mg(2+) site. Glutamate 68–alanine 69 is a binding site for substrate.

The protein belongs to the YjjX NTPase family. Homodimer. Mg(2+) is required as a cofactor. Requires Mn(2+) as cofactor.

The catalysed reaction is XTP + H2O = XDP + phosphate + H(+). The enzyme catalyses ITP + H2O = IDP + phosphate + H(+). Phosphatase that hydrolyzes non-canonical purine nucleotides such as XTP and ITP to their respective diphosphate derivatives. Probably excludes non-canonical purines from DNA/RNA precursor pool, thus preventing their incorporation into DNA/RNA and avoiding chromosomal lesions. The sequence is that of Inosine/xanthosine triphosphatase from Proteus mirabilis (strain HI4320).